The following is a 159-amino-acid chain: UPF0587 protein v1g245604 (159 aa).

Positions 33, 36, 67, and 70 each coordinate Zn(2+).

It belongs to the UPF0587 family.

The polypeptide is UPF0587 protein v1g245604 (Nematostella vectensis (Starlet sea anemone)).